Reading from the N-terminus, the 275-residue chain is MDTDHRPQAEGAVLTPSAEAPPVAAPRIDCRDIRVFYGADQAIHNVSLSFPDRAVTALIGPSGCGKSTFLRCLNRMNDTIENCRVEGQILMDGQDINDHSIDPVLLRSRVGMVFQKPNPFPKSIYDNIAYGPRIHGLASSREDLDAIVEKSLRRAGLWEEVKDRLQAPGTSLSGGQQQRLCIARAIAVRPEVILMDEPCSALDPVATARIEELIDELRKRYCIVIVTHSMQQAARVSQRTAFFHLGNLIEMGETEQIFTNPREKRTEDYITGRFG.

Residues 28–270 enclose the ABC transporter domain; it reads IDCRDIRVFY…PREKRTEDYI (243 aa). 60-67 is an ATP binding site; that stretch reads GPSGCGKS.

It belongs to the ABC transporter superfamily. Phosphate importer (TC 3.A.1.7) family. As to quaternary structure, the complex is composed of two ATP-binding proteins (PstB), two transmembrane proteins (PstC and PstA) and a solute-binding protein (PstS).

The protein resides in the cell inner membrane. The catalysed reaction is phosphate(out) + ATP + H2O = ADP + 2 phosphate(in) + H(+). Part of the ABC transporter complex PstSACB involved in phosphate import. Responsible for energy coupling to the transport system. The protein is Phosphate import ATP-binding protein PstB of Hyphomonas neptunium (strain ATCC 15444).